Reading from the N-terminus, the 565-residue chain is Formate--tetrahydrofolate ligase (565 aa).

65–72 (TPAGEGKT) lines the ATP pocket.

This sequence belongs to the formate--tetrahydrofolate ligase family.

The catalysed reaction is (6S)-5,6,7,8-tetrahydrofolate + formate + ATP = (6R)-10-formyltetrahydrofolate + ADP + phosphate. Its pathway is one-carbon metabolism; tetrahydrofolate interconversion. The sequence is that of Formate--tetrahydrofolate ligase from Syntrophus aciditrophicus (strain SB).